A 213-amino-acid chain; its full sequence is Nucleoside triphosphate pyrophosphatase (213 aa).

Residue Asp79 is the Proton acceptor of the active site.

Belongs to the Maf family. Requires a divalent metal cation as cofactor.

The protein resides in the cytoplasm. It catalyses the reaction a ribonucleoside 5'-triphosphate + H2O = a ribonucleoside 5'-phosphate + diphosphate + H(+). The enzyme catalyses a 2'-deoxyribonucleoside 5'-triphosphate + H2O = a 2'-deoxyribonucleoside 5'-phosphate + diphosphate + H(+). In terms of biological role, nucleoside triphosphate pyrophosphatase. May have a dual role in cell division arrest and in preventing the incorporation of modified nucleotides into cellular nucleic acids. The polypeptide is Nucleoside triphosphate pyrophosphatase (Mycobacterium leprae (strain Br4923)).